Consider the following 326-residue polypeptide: Alkanal monooxygenase beta chain (326 aa).

The protein belongs to the bacterial luciferase oxidoreductase family. Heterodimer of an alpha and a beta chain.

The catalysed reaction is a long-chain fatty aldehyde + FMNH2 + O2 = a long-chain fatty acid + hnu + FMN + H2O + 2 H(+). In terms of biological role, light-emitting reaction in luminous bacteria. The specific role of the beta subunit is unknown, but it is absolutely required for bioluminescence activity. The polypeptide is Alkanal monooxygenase beta chain (luxB) (Aliivibrio fischeri (Vibrio fischeri)).